Consider the following 149-residue polypeptide: Calmodulin (149 aa).

EF-hand domains follow at residues 8–43 (EQIA…LGQN), 44–79 (PTEA…KMKD), 81–116 (DSEE…LGEK), and 117–149 (LTDE…MMSK). The Ca(2+) site is built by D21, D23, D25, T27, E32, D57, D59, N61, T63, E68, D94, D96, N98, E105, D130, D132, D134, Q136, and E141.

The protein belongs to the calmodulin family.

Functionally, calmodulin mediates the control of a large number of enzymes, ion channels and other proteins by Ca(2+). Among the enzymes to be stimulated by the calmodulin-Ca(2+) complex are a number of protein kinases and phosphatases. This is Calmodulin from Globisporangium splendens (Leaf rot fungus).